Reading from the N-terminus, the 478-residue chain is Transcript termination protein A18 (478 aa).

Residues 98–254 form the Helicase ATP-binding domain; sequence KVELKRPMYV…NDVINVSNSS (157 aa). 111–118 provides a ligand contact to ATP; the sequence is LACGFGKT. Residues 204 to 207 carry the DESH box motif; that stretch reads DESH. The Helicase C-terminal domain maps to 307–454; sequence ILDTIIYDFE…IITLAIEKLG (148 aa).

Belongs to the helicase family. Poxviruses subfamily. As to quaternary structure, interacts with G2. Might be part of a transcription complex composed at least of G2, A18, and H5.

The protein localises to the virion. DNA helicase which seems to act as a postreplicative transcription termination factor. Involved in ATP-dependent release of nascent RNA. Forms a stable complex with single-stranded DNA, and to a lesser extent RNA. This is Transcript termination protein A18 from Erythrocebus patas (Red guenon).